We begin with the raw amino-acid sequence, 621 residues long: Glutamyl-tRNA(Gln) amidotransferase subunit B, mitochondrial (621 aa).

The transit peptide at 1-41 (MARLPTTELRKYLLTGQFTRRGCLHLRPSPLAPPIPPLRTL) directs the protein to the mitochondrion. 2 disordered regions span residues 26 to 86 (LRPS…DNQT) and 106 to 136 (SKLF…APFD). Low complexity-rich tracts occupy residues 38-57 (LRTL…QIIP) and 110-120 (SPASTPSSSSD).

It belongs to the GatB/GatE family. GatB subfamily. As to quaternary structure, subunit of the heterotrimeric GatCAB amidotransferase (AdT) complex, composed of A, B and C subunits.

The protein localises to the mitochondrion. It catalyses the reaction L-glutamyl-tRNA(Gln) + L-glutamine + ATP + H2O = L-glutaminyl-tRNA(Gln) + L-glutamate + ADP + phosphate + H(+). In terms of biological role, allows the formation of correctly charged Gln-tRNA(Gln) through the transamidation of misacylated Glu-tRNA(Gln) in the mitochondria. The reaction takes place in the presence of glutamine and ATP through an activated gamma-phospho-Glu-tRNA(Gln). This chain is Glutamyl-tRNA(Gln) amidotransferase subunit B, mitochondrial, found in Podospora anserina (strain S / ATCC MYA-4624 / DSM 980 / FGSC 10383) (Pleurage anserina).